The primary structure comprises 94 residues: Large ribosomal subunit protein eL42 (94 aa).

The Zn(2+) site is built by cysteine 11, cysteine 14, cysteine 71, and cysteine 74. The C4-type zinc finger occupies 11-74 (CPFCKRHTIH…LDLRFRCTVC (64 aa)).

Belongs to the eukaryotic ribosomal protein eL42 family. In terms of assembly, part of the 50S ribosomal subunit. The cofactor is Zn(2+).

Functionally, binds to the 23S rRNA. The protein is Large ribosomal subunit protein eL42 of Thermococcus kodakarensis (strain ATCC BAA-918 / JCM 12380 / KOD1) (Pyrococcus kodakaraensis (strain KOD1)).